A 481-amino-acid chain; its full sequence is Keratin, type II cuticular Hb1 (481 aa).

A head region spans residues 1 to 106; the sequence is MTCGSGFCGR…PNAQCVKHEE (106 aa). One can recognise an IF rod domain in the interval 106–417; that stretch reads EKEQIKCLNS…RLLEGEEQRL (312 aa). Residues 107–141 are coil 1A; that stretch reads KEQIKCLNSKFAAFIDKVRFLEQQNKLLETKWQFY. The linker 1 stretch occupies residues 142 to 151; sequence QNRKCCESNM. The interval 152 to 252 is coil 1B; the sequence is EPLFEGYIEA…YDEETRILHS (101 aa). A Glycyl lysine isopeptide (Lys-Gly) (interchain with G-Cter in SUMO1) cross-link involves residue Lys-212. Residues 253–269 are linker 12; that stretch reads HISDTSIVVKMDNSRDL. The segment at 270–413 is coil 2; it reads NMDCVVAEIK…TTYRRLLEGE (144 aa). Residues 414 to 481 form a tail region; the sequence is EQRLCEGVGA…GSAVSCGRKC (68 aa).

Belongs to the intermediate filament family. In terms of assembly, heterotetramer of two type I and two type II keratins. In terms of tissue distribution, expressed in dorsal skin.

This Mus musculus (Mouse) protein is Keratin, type II cuticular Hb1.